Consider the following 108-residue polypeptide: MPKLGILKSKSMFCVIYRSSKRDQTYLYVEKKDDFSRVPEELMKGFGQPQLAMILPLDGRKKLVNADIEKVKQALTEQGYYLQLPPSPEDLLKQHLSVMGQKTDDTNK.

A YcgL domain is found at 12–96; it reads MFCVIYRSSK…SPEDLLKQHL (85 aa).

The polypeptide is Protein YcgL (Shigella dysenteriae serotype 1 (strain Sd197)).